A 642-amino-acid polypeptide reads, in one-letter code: Forkhead box protein K2 (642 aa).

One can recognise an FHA domain in the interval 30–91 (VTIGRNSSQG…NGVFVDGVFQ (62 aa)). The disordered stretch occupies residues 201-221 (QSENDKDASGGDSPKDDSKPP). Over residues 203–219 (ENDKDASGGDSPKDDSK) the composition is skewed to basic and acidic residues. Residues 219–314 (KPPYSYAQLI…EQAFRKRRPR (96 aa)) constitute a DNA-binding region (fork-head). The segment at 261–279 (KGWQNSIRHNLSLNRYFIK) is DNA-binding; major groove. Mg(2+) is bound by residues Leu-271, Ser-272, Asn-274, and Phe-277. DNA-binding; minor groove stretches follow at residues 289–293 (KGSFW) and 309–314 (RKRRPR). Disordered stretches follow at residues 323–359 (LGPLSSRSAPASPNHSGVFSAHSSGVQTPESLSREGS) and 589–615 (ASASLPTKRQNGDQSEQPDIKRGKTDE). 2 stretches are compositionally biased toward polar residues: residues 327–353 (SSRSAPASPNHSGVFSAHSSGVQTPES) and 589–605 (ASASLPTKRQNGDQSEQ). Residues 606–615 (PDIKRGKTDE) show a composition bias toward basic and acidic residues.

In neurula embryos, expressed strongly in the future floor plate and weakly in the neural crest progenitor cells. As development progresses, expression becomes stronger in neural crest cells. At stage 24, expressed in the eye, brain, branchial arches and in the presomitic mesoderm in the posterior embryo. At stage 29, additionally expressed in the pronephric tubules. At stage 35, expressed in the migrating lateral muscle precursors of the abdomen. Additionally, the developing proctodeum and head structures including the branchial arches, eyes and otic vesicles continue to show expression. Expression also persists in the nephros.

The protein resides in the nucleus. The protein localises to the cytoplasm. In terms of biological role, transcriptional regulator involved in different processes such as glucose metabolism, aerobic glycolysis and autophagy. Recognizes and binds the forkhead DNA sequence motif (5'-GTAAACA-3') and can both act as a transcription activator or repressor, depending on the context. Acts as a key regulator of metabolic reprogramming towards aerobic glycolysis, a process in which glucose is converted to lactate in the presence of oxygen. Acts as a negative regulator of autophagy in skeletal muscle: in response to starvation, enters the nucleus, binds the promoters of autophagy genes and represses their expression, preventing proteolysis of skeletal muscle proteins. The chain is Forkhead box protein K2 from Xenopus laevis (African clawed frog).